The chain runs to 532 residues: Autophagy-related protein 21 (532 aa).

2 WD repeats span residues 265–310 (AHDS…KPFN) and 321–360 (HNIAKVNCLSFSLDNSILGCGSESNTIHFFRLSKQPHESF). Residues 317–321 (LRRGH) carry the L/FRRG motif motif. Positions 360 to 380 (FEYEEDPANESDPDDEDRSSE) are disordered. Over residues 361–378 (EYEEDPANESDPDDEDRS) the composition is skewed to acidic residues.

It belongs to the WD repeat PROPPIN family.

It localises to the cytoplasm. The protein localises to the membrane. It is found in the vacuole membrane. Its function is as follows. Required for cytoplasm to vacuole transport (Cvt) vesicles formation and mitophagy. Involved in binding of phosphatidylethanolamine to ATG8 and in recruitment of ATG8 and ATG5 to the pre-autophagosomal structure. Protects ATG8 from ARG4-mediated cleavage. In Debaryomyces hansenii (strain ATCC 36239 / CBS 767 / BCRC 21394 / JCM 1990 / NBRC 0083 / IGC 2968) (Yeast), this protein is Autophagy-related protein 21 (ATG21).